Here is a 305-residue protein sequence, read N- to C-terminus: Nitrogen assimilation regulatory protein nac (305 aa).

One can recognise an HTH lysR-type domain in the interval 1–58 (MNLRRLKYFVKIVDIGSLTQAAEVLHIAQPALSQQVATLEGEMDQQLLIRTKRGVTPT). Residues 18–37 (LTQAAEVLHIAQPALSQQVA) constitute a DNA-binding region (H-T-H motif).

This sequence belongs to the LysR transcriptional regulatory family.

In terms of biological role, transcriptional activator for the hut, put and ure operons and repressor for the gdh and gltB operons in response to nitrogen limitation. Negative regulator of its own expression. The sequence is that of Nitrogen assimilation regulatory protein nac (nac) from Klebsiella aerogenes (Enterobacter aerogenes).